Consider the following 558-residue polypeptide: Podocalyxin (558 aa).

Positions 1–22 (MRCALALSALLLLLSTPPLLPS) are cleaved as a signal peptide. The span at 20 to 29 (LPSSPSPSPS) shows a compositional bias: pro residues. Disordered regions lie at residues 20 to 50 (LPSS…PTPA), 83 to 210 (LGVS…DHLM), and 270 to 338 (SVIS…VAHE). Topologically, residues 23 to 461 (SPSPSPSPSQ…EEAEDRFSMP (439 aa)) are extracellular. Composition is skewed to polar residues over residues 32–50 (QNAT…PTPA) and 83–107 (LGVS…NTTV). 3 N-linked (GlcNAc...) asparagine glycosylation sites follow: N33, N43, and N104. Over residues 125-142 (STKSADTTTVATSTATAK) the composition is skewed to low complexity. Polar residues-rich tracts occupy residues 143–173 (PNTT…LTST), 190–204 (RQPT…PTSS), and 270–302 (SVIS…TSPA). N-linked (GlcNAc...) asparagine glycosylation occurs at N144. Residues 313-324 (TMSSSPTAASTT) are compositionally biased toward low complexity. N360 carries an N-linked (GlcNAc...) asparagine glycan. The helical transmembrane segment at 462–482 (LIITIVCMASFLLLVAALYGC) threads the bilayer. Residues 483–558 (CHQRLSQRKD…DLDEEEDTHL (76 aa)) lie on the Cytoplasmic side of the membrane. T518 carries the phosphothreonine modification. S529 and S537 each carry phosphoserine. Residue T556 is modified to Phosphothreonine.

Belongs to the podocalyxin family. In terms of assembly, monomer; when associated with the membrane raft. Oligomer; when integrated in the apical membrane. Interacts (via the C-terminal PDZ-binding motif DTHL) with NHERF1 (via the PDZ domains); the interaction is not detected in glomerular epithelium cells, take place early in the secretory pathway and is necessary for its apical membrane sorting. Found in a complex with EZR, PODXL and NHERF2. Associates with the actin cytoskeleton through complex formation with EZR and NHERF2. Interacts (via the C-terminal PDZ-binding motif DTHL) with NHERF2 (via the PDZ 1 domain); interaction is detected in glomerular epithelium cells. Interacts with EZR. N- and O-linked glycosylated. Sialoglycoprotein. Glomerular epithelium cell (podocyte).

Its subcellular location is the apical cell membrane. The protein localises to the cell projection. The protein resides in the lamellipodium. It localises to the filopodium. It is found in the ruffle. Its subcellular location is the microvillus. The protein localises to the membrane raft. The protein resides in the membrane. In terms of biological role, involved in the regulation of both adhesion and cell morphology and cancer progression. Functions as an anti-adhesive molecule that maintains an open filtration pathway between neighboring foot processes in the podocyte by charge repulsion. Acts as a pro-adhesive molecule, enhancing the adherence of cells to immobilized ligands, increasing the rate of migration and cell-cell contacts in an integrin-dependent manner. Induces the formation of apical actin-dependent microvilli. Involved in the formation of a preapical plasma membrane subdomain to set up initial epithelial polarization and the apical lumen formation during renal tubulogenesis. Plays a role in cancer development and aggressiveness by inducing cell migration and invasion through its interaction with the actin-binding protein EZR. Affects EZR-dependent signaling events, leading to increased activities of the MAPK and PI3K pathways in cancer cells. This is Podocalyxin (PODXL) from Homo sapiens (Human).